A 36-amino-acid polypeptide reads, in one-letter code: Photosystem I reaction center subunit VIII (36 aa).

The helical transmembrane segment at 7–29 threads the bilayer; that stretch reads PSILVPLVGIIFPGISMALLFIY.

Belongs to the PsaI family.

The protein localises to the plastid. It is found in the chloroplast thylakoid membrane. In terms of biological role, may help in the organization of the PsaL subunit. This is Photosystem I reaction center subunit VIII from Gracilaria tenuistipitata var. liui (Red alga).